A 90-amino-acid chain; its full sequence is Barrier-to-autointegration factor-like protein (90 aa).

It belongs to the BAF family. Homodimer. Heterodimerizes with BANF1.

Its subcellular location is the nucleus. The protein resides in the cytoplasm. Functionally, may play a role in BANF1 regulation and influence tissue-specific roles of BANF1. In Bos taurus (Bovine), this protein is Barrier-to-autointegration factor-like protein (BANF2).